Here is a 940-residue protein sequence, read N- to C-terminus: Nitrogen permease regulator 3 (940 aa).

Positions 1–21 (MYTNLPKACLTGIVLTISTHS) are cleaved as a signal peptide. A compositionally biased stretch (basic and acidic residues) spans 37–52 (EARRGRKVDSRNERVR). Disordered regions lie at residues 37–155 (EARR…PSES), 317–387 (RKQK…EQSD), and 812–848 (EHRQ…ANIS). The span at 61 to 72 (SAASGAVDAVGE) shows a compositional bias: low complexity. Positions 75-84 (DGLEEESSES) are enriched in acidic residues. Residues 123–133 (SSAVGGSSAAE) show a composition bias toward low complexity. 2 stretches are compositionally biased toward polar residues: residues 324 to 336 (QQTN…SSSG) and 355 to 378 (ERQP…SESG).

The protein belongs to the NPR3 family.

Functionally, mediates inactivation of the TORC1 complex in response to amino acid starvation. Required for meiotic nuclear division. The sequence is that of Nitrogen permease regulator 3 (NPR3) from Eremothecium gossypii (strain ATCC 10895 / CBS 109.51 / FGSC 9923 / NRRL Y-1056) (Yeast).